Consider the following 474-residue polypeptide: ATP synthase subunit beta (474 aa).

ATP is bound at residue Gly-152–Thr-159.

Belongs to the ATPase alpha/beta chains family. In terms of assembly, F-type ATPases have 2 components, CF(1) - the catalytic core - and CF(0) - the membrane proton channel. CF(1) has five subunits: alpha(3), beta(3), gamma(1), delta(1), epsilon(1). CF(0) has three main subunits: a(1), b(2) and c(9-12). The alpha and beta chains form an alternating ring which encloses part of the gamma chain. CF(1) is attached to CF(0) by a central stalk formed by the gamma and epsilon chains, while a peripheral stalk is formed by the delta and b chains.

Its subcellular location is the cell inner membrane. It carries out the reaction ATP + H2O + 4 H(+)(in) = ADP + phosphate + 5 H(+)(out). Its function is as follows. Produces ATP from ADP in the presence of a proton gradient across the membrane. The catalytic sites are hosted primarily by the beta subunits. This is ATP synthase subunit beta from Paramagnetospirillum magneticum (strain ATCC 700264 / AMB-1) (Magnetospirillum magneticum).